The chain runs to 284 residues: MSLAPVQVIGVLNVTDNSFSDGGRYLDPDDAVQHGLAMVAEGAAIVDVGGESTRPGAIRTDPRVELSRIVPVVKELAAQGITVSIDTTRADVARAALQSGARIVNDVSGGRADPAMAPLVAEAGVAWVLMHWRLMSAERPYEAPNYRDVVAEVRADLLAGVDQAVAAGVDPGSLVIDPGLGFAKTGQHNWALLNALPELVATGVPILLGASRKRFLGRLLAGADGAVRPPDGRETATAVISALAALHGAWGVRVHDVRASVDALKVVGAWLHAGPQIEKVRCDG.

The 260-residue stretch at 6-265 folds into the Pterin-binding domain; it reads VQVIGVLNVT…DVRASVDALK (260 aa). Asn13 serves as a coordination point for Mg(2+). Residues Thr53, Asp86, Asn105, Asp177, Lys213, and 253-255 contribute to the (7,8-dihydropterin-6-yl)methyl diphosphate site; that span reads RVH.

The protein belongs to the DHPS family. As to quaternary structure, homodimer. Mg(2+) serves as cofactor.

It carries out the reaction (7,8-dihydropterin-6-yl)methyl diphosphate + 4-aminobenzoate = 7,8-dihydropteroate + diphosphate. It functions in the pathway cofactor biosynthesis; tetrahydrofolate biosynthesis; 7,8-dihydrofolate from 2-amino-4-hydroxy-6-hydroxymethyl-7,8-dihydropteridine diphosphate and 4-aminobenzoate: step 1/2. Is potently inhibited by the sulfone dapsone and the two sulfonamides sulfamethoxazole and sulfamethoxypyridazine, with Kis in the range of 12 to 32 nM. To a lesser extent, is also inhibited by p-aminosalicylate (PAS). Catalyzes the condensation of para-aminobenzoate (pABA) with 6-hydroxymethyl-7,8-dihydropterin diphosphate (DHPt-PP) to form 7,8-dihydropteroate, the immediate precursor of folate derivatives. This chain is Dihydropteroate synthase (folP1), found in Mycobacterium leprae (strain TN).